The following is a 702-amino-acid chain: Methionine--tRNA ligase (702 aa).

Positions 14-24 (PYANGPVHLGH) match the 'HIGH' region motif. 4 residues coordinate Zn(2+): C146, C149, C159, and C162. Positions 344–348 (KFSKS) match the 'KMSKS' region motif. K347 is a binding site for ATP. The tRNA-binding domain occupies 601-702 (DFQKVDLRVA…GEKINGQSVQ (102 aa)).

The protein belongs to the class-I aminoacyl-tRNA synthetase family. MetG type 1 subfamily. As to quaternary structure, homodimer. It depends on Zn(2+) as a cofactor.

It localises to the cytoplasm. It carries out the reaction tRNA(Met) + L-methionine + ATP = L-methionyl-tRNA(Met) + AMP + diphosphate. In terms of biological role, is required not only for elongation of protein synthesis but also for the initiation of all mRNA translation through initiator tRNA(fMet) aminoacylation. The chain is Methionine--tRNA ligase from Chlorobium luteolum (strain DSM 273 / BCRC 81028 / 2530) (Pelodictyon luteolum).